Consider the following 489-residue polypeptide: L-arabinose isomerase (489 aa).

Glutamate 300, glutamate 325, histidine 342, and histidine 441 together coordinate Mn(2+).

The protein belongs to the arabinose isomerase family. Mn(2+) serves as cofactor.

The catalysed reaction is beta-L-arabinopyranose = L-ribulose. It participates in carbohydrate degradation; L-arabinose degradation via L-ribulose; D-xylulose 5-phosphate from L-arabinose (bacterial route): step 1/3. Functionally, catalyzes the conversion of L-arabinose to L-ribulose. The polypeptide is L-arabinose isomerase (Clostridium beijerinckii (strain ATCC 51743 / NCIMB 8052) (Clostridium acetobutylicum)).